A 69-amino-acid chain; its full sequence is Antimicrobial peptide ISAMP (69 aa).

Positions 1–23 are cleaved as a signal peptide; sequence MRAVAIFIVTLLVLECVYFVMSE.

In terms of tissue distribution, expressed in the fat body, hemocytes and salivary glands of partially-fed female ticks. Not expressed in the midgut.

The protein resides in the secreted. Its function is as follows. Has antimicrobial activity against B.cereus (MIC=5.8 ug/ml), B.subtilis (MIC=12.3 ug/ml), S.aureus (MIC=10.4 ug/ml), E.coli Edl 933 (MIC=3.2 ug/ml) and E.coli MG/655 (MIC=4.2 ug/ml). Non-hemolytic. The sequence is that of Antimicrobial peptide ISAMP from Ixodes scapularis (Black-legged tick).